Here is a 302-residue protein sequence, read N- to C-terminus: DDRGK domain-containing protein 1 (302 aa).

Residues 1–21 form a helical membrane-spanning segment; sequence MDPLLLGSVGVLVLAVTLIIW. Over 22–302 the chain is Cytoplasmic; it reads RLLKLQWDEK…IRLETPSAAE (281 aa). The segment at 101–178 is disordered; the sequence is EYDEDGKKIG…EREEKERKEH (78 aa). Over residues 118-178 the composition is skewed to basic and acidic residues; that stretch reads QAKEEKRQMR…EREEKERKEH (61 aa).

It belongs to the DDRGK1 family.

The protein localises to the endoplasmic reticulum membrane. In terms of biological role, substrate adapter for ufmylation, the covalent attachment of the ubiquitin-like modifier ufm-1 to substrate proteins. The protein is DDRGK domain-containing protein 1 of Caenorhabditis elegans.